A 68-amino-acid polypeptide reads, in one-letter code: DNA-directed RNA polymerase subunit omega (68 aa).

The protein belongs to the RNA polymerase subunit omega family. The RNAP catalytic core consists of 2 alpha, 1 beta, 1 beta' and 1 omega subunit. When a sigma factor is associated with the core the holoenzyme is formed, which can initiate transcription.

It carries out the reaction RNA(n) + a ribonucleoside 5'-triphosphate = RNA(n+1) + diphosphate. In terms of biological role, promotes RNA polymerase assembly. Latches the N- and C-terminal regions of the beta' subunit thereby facilitating its interaction with the beta and alpha subunits. The sequence is that of DNA-directed RNA polymerase subunit omega from Geobacter sp. (strain M21).